We begin with the raw amino-acid sequence, 298 residues long: Inosose dehydratase (298 aa).

Belongs to the IolE/MocC family. Requires glutathione as cofactor. Co(2+) serves as cofactor. Mn(2+) is required as a cofactor.

It carries out the reaction scyllo-inosose = 3D-3,5/4-trihydroxycyclohexane-1,2-dione + H2O. Its pathway is polyol metabolism; myo-inositol degradation into acetyl-CoA; acetyl-CoA from myo-inositol: step 2/7. Catalyzes the dehydration of inosose (2-keto-myo-inositol, 2KMI or 2,4,6/3,5-pentahydroxycyclohexanone) to 3D-(3,5/4)-trihydroxycyclohexane-1,2-dione (D-2,3-diketo-4-deoxy-epi-inositol). The chain is Inosose dehydratase from Clostridium botulinum (strain Alaska E43 / Type E3).